Consider the following 103-residue polypeptide: Pyrimidine/purine nucleoside phosphorylase (103 aa).

It belongs to the nucleoside phosphorylase PpnP family.

It catalyses the reaction a purine D-ribonucleoside + phosphate = a purine nucleobase + alpha-D-ribose 1-phosphate. It carries out the reaction adenosine + phosphate = alpha-D-ribose 1-phosphate + adenine. The catalysed reaction is cytidine + phosphate = cytosine + alpha-D-ribose 1-phosphate. The enzyme catalyses guanosine + phosphate = alpha-D-ribose 1-phosphate + guanine. It catalyses the reaction inosine + phosphate = alpha-D-ribose 1-phosphate + hypoxanthine. It carries out the reaction thymidine + phosphate = 2-deoxy-alpha-D-ribose 1-phosphate + thymine. The catalysed reaction is uridine + phosphate = alpha-D-ribose 1-phosphate + uracil. The enzyme catalyses xanthosine + phosphate = alpha-D-ribose 1-phosphate + xanthine. Its function is as follows. Catalyzes the phosphorolysis of diverse nucleosides, yielding D-ribose 1-phosphate and the respective free bases. Can use uridine, adenosine, guanosine, cytidine, thymidine, inosine and xanthosine as substrates. Also catalyzes the reverse reactions. The protein is Pyrimidine/purine nucleoside phosphorylase of Shewanella baltica (strain OS155 / ATCC BAA-1091).